Here is an 87-residue protein sequence, read N- to C-terminus: Small ribosomal subunit protein bS20 (87 aa).

Residues 1 to 11 are compositionally biased toward basic residues; that stretch reads MANIKSAKKRA. A disordered region spans residues 1–27; the sequence is MANIKSAKKRAVQSEKRRQHNASQRSM.

Belongs to the bacterial ribosomal protein bS20 family.

Its function is as follows. Binds directly to 16S ribosomal RNA. This is Small ribosomal subunit protein bS20 from Haemophilus influenzae (strain PittEE).